Here is a 385-residue protein sequence, read N- to C-terminus: MKNLTILGSTGSIGVSTLDVVKAYPDMFRVVALTAGNNLELLKTQIETFSPDLVSVLTAEKAQALSRSLTGKKPEIMHGVEGMIAAATASETTMVVAAIVGAAGLVPTTAAIMAGKDVALANKETLVTAGHLVMQMVREKKVNLYPVDSEHCAVFQSMAGHRSQDIARVILTASGGPFLNWGREKLQAATVADALNHPNWSMGRKITVDSATMMNKGLEVIEARWLFDIPVQRIGVNIHPQSIIHSMVEYVDGSVMAQLGTPDMKGPIAYALTYPGRVPSGVKALDLTALSGLTFFKPDTDRFPALQLAYRAADAGESMPAVMNAANEIAVEAFLGGRIGFMAIAEAIEKVMDLHEPHALASIEEVLEADRWGRRTAKEVLGVGC.

Thr10, Gly11, Ser12, Ile13, Gly36, Asn38, and Asn122 together coordinate NADPH. Lys123 is a binding site for 1-deoxy-D-xylulose 5-phosphate. An NADPH-binding site is contributed by Glu124. Residue Asp148 participates in Mn(2+) binding. Residues Ser149, Glu150, Ser174, and His197 each contribute to the 1-deoxy-D-xylulose 5-phosphate site. Glu150 provides a ligand contact to Mn(2+). Gly203 contributes to the NADPH binding site. 1-deoxy-D-xylulose 5-phosphate contacts are provided by Ser210, Asn215, Lys216, and Glu219. Residue Glu219 participates in Mn(2+) binding.

The protein belongs to the DXR family. Requires Mg(2+) as cofactor. Mn(2+) is required as a cofactor.

The catalysed reaction is 2-C-methyl-D-erythritol 4-phosphate + NADP(+) = 1-deoxy-D-xylulose 5-phosphate + NADPH + H(+). The protein operates within isoprenoid biosynthesis; isopentenyl diphosphate biosynthesis via DXP pathway; isopentenyl diphosphate from 1-deoxy-D-xylulose 5-phosphate: step 1/6. Its function is as follows. Catalyzes the NADPH-dependent rearrangement and reduction of 1-deoxy-D-xylulose-5-phosphate (DXP) to 2-C-methyl-D-erythritol 4-phosphate (MEP). In Citrifermentans bemidjiense (strain ATCC BAA-1014 / DSM 16622 / JCM 12645 / Bem) (Geobacter bemidjiensis), this protein is 1-deoxy-D-xylulose 5-phosphate reductoisomerase.